Consider the following 883-residue polypeptide: Alanine--tRNA ligase (883 aa).

4 residues coordinate Zn(2+): His563, His567, Cys677, and His681.

It belongs to the class-II aminoacyl-tRNA synthetase family. Zn(2+) serves as cofactor.

The protein localises to the cytoplasm. The catalysed reaction is tRNA(Ala) + L-alanine + ATP = L-alanyl-tRNA(Ala) + AMP + diphosphate. Functionally, catalyzes the attachment of alanine to tRNA(Ala) in a two-step reaction: alanine is first activated by ATP to form Ala-AMP and then transferred to the acceptor end of tRNA(Ala). Also edits incorrectly charged Ser-tRNA(Ala) and Gly-tRNA(Ala) via its editing domain. This is Alanine--tRNA ligase from Cereibacter sphaeroides (strain ATCC 17023 / DSM 158 / JCM 6121 / CCUG 31486 / LMG 2827 / NBRC 12203 / NCIMB 8253 / ATH 2.4.1.) (Rhodobacter sphaeroides).